Here is a 573-residue protein sequence, read N- to C-terminus: CTP synthase (573 aa).

Residues 1-281 (MGQTRIQART…DAYVVRRLGL (281 aa)) form an amidoligase domain region. S23 provides a ligand contact to CTP. S23 serves as a coordination point for UTP. ATP-binding positions include 24–29 (SLGKGL) and D81. 2 residues coordinate Mg(2+): D81 and E155. CTP-binding positions include 162 to 164 (DIE), 202 to 207 (KTKPTQ), and K238. UTP contacts are provided by residues 202 to 207 (KTKPTQ) and K238. The 249-residue stretch at 306–554 (EVALVGKYVD…IAAALKYKLA (249 aa)) folds into the Glutamine amidotransferase type-1 domain. Residue G369 participates in L-glutamine binding. C396 acts as the Nucleophile; for glutamine hydrolysis in catalysis. Residues 397 to 400 (LGLQ), E419, and R480 contribute to the L-glutamine site. Catalysis depends on residues H527 and E529.

This sequence belongs to the CTP synthase family. In terms of assembly, homotetramer.

The enzyme catalyses UTP + L-glutamine + ATP + H2O = CTP + L-glutamate + ADP + phosphate + 2 H(+). It catalyses the reaction L-glutamine + H2O = L-glutamate + NH4(+). It carries out the reaction UTP + NH4(+) + ATP = CTP + ADP + phosphate + 2 H(+). It participates in pyrimidine metabolism; CTP biosynthesis via de novo pathway; CTP from UDP: step 2/2. With respect to regulation, allosterically activated by GTP, when glutamine is the substrate; GTP has no effect on the reaction when ammonia is the substrate. The allosteric effector GTP functions by stabilizing the protein conformation that binds the tetrahedral intermediate(s) formed during glutamine hydrolysis. Inhibited by the product CTP, via allosteric rather than competitive inhibition. Functionally, catalyzes the ATP-dependent amination of UTP to CTP with either L-glutamine or ammonia as the source of nitrogen. Regulates intracellular CTP levels through interactions with the four ribonucleotide triphosphates. This chain is CTP synthase, found in Nocardia farcinica (strain IFM 10152).